The primary structure comprises 207 residues: Large ribosomal subunit protein uL4 (207 aa).

The interval His-49–Ile-78 is disordered.

Belongs to the universal ribosomal protein uL4 family. In terms of assembly, part of the 50S ribosomal subunit.

In terms of biological role, one of the primary rRNA binding proteins, this protein initially binds near the 5'-end of the 23S rRNA. It is important during the early stages of 50S assembly. It makes multiple contacts with different domains of the 23S rRNA in the assembled 50S subunit and ribosome. Forms part of the polypeptide exit tunnel. This is Large ribosomal subunit protein uL4 from Streptococcus pneumoniae serotype 19F (strain G54).